The following is a 100-amino-acid chain: Urease subunit gamma (100 aa).

It belongs to the urease gamma subunit family. In terms of assembly, heterotrimer of UreA (gamma), UreB (beta) and UreC (alpha) subunits. Three heterotrimers associate to form the active enzyme.

It localises to the cytoplasm. The enzyme catalyses urea + 2 H2O + H(+) = hydrogencarbonate + 2 NH4(+). The protein operates within nitrogen metabolism; urea degradation; CO(2) and NH(3) from urea (urease route): step 1/1. The protein is Urease subunit gamma of Leptothrix cholodnii (strain ATCC 51168 / LMG 8142 / SP-6) (Leptothrix discophora (strain SP-6)).